The chain runs to 386 residues: tRNA-specific 2-thiouridylase MnmA (386 aa).

ATP contacts are provided by residues 9–16 (GMSGGVDS) and M35. An interaction with target base in tRNA region spans residues 95-97 (NPD). C100 (nucleophile) is an active-site residue. The cysteines at positions 100 and 196 are disulfide-linked. ATP is bound at residue G124. The segment at 146–148 (KDQ) is interaction with tRNA. The active-site Cysteine persulfide intermediate is C196. Positions 308 to 309 (RY) are interaction with tRNA.

Belongs to the MnmA/TRMU family.

The protein resides in the cytoplasm. The catalysed reaction is S-sulfanyl-L-cysteinyl-[protein] + uridine(34) in tRNA + AH2 + ATP = 2-thiouridine(34) in tRNA + L-cysteinyl-[protein] + A + AMP + diphosphate + H(+). Its function is as follows. Catalyzes the 2-thiolation of uridine at the wobble position (U34) of tRNA, leading to the formation of s(2)U34. This Burkholderia thailandensis (strain ATCC 700388 / DSM 13276 / CCUG 48851 / CIP 106301 / E264) protein is tRNA-specific 2-thiouridylase MnmA.